The sequence spans 369 residues: 2-aminoethylphosphonate--pyruvate transaminase (369 aa).

The residue at position 193 (Lys-193) is an N6-(pyridoxal phosphate)lysine.

This sequence belongs to the class-V pyridoxal-phosphate-dependent aminotransferase family. PhnW subfamily. As to quaternary structure, homodimer. Requires pyridoxal 5'-phosphate as cofactor.

The catalysed reaction is (2-aminoethyl)phosphonate + pyruvate = phosphonoacetaldehyde + L-alanine. In terms of biological role, involved in phosphonate degradation. This is 2-aminoethylphosphonate--pyruvate transaminase from Pseudomonas fluorescens (strain Pf0-1).